The primary structure comprises 121 residues: Large ribosomal subunit protein eL31 (121 aa).

This sequence belongs to the eukaryotic ribosomal protein eL31 family.

This Panax ginseng (Korean ginseng) protein is Large ribosomal subunit protein eL31 (RPL31).